A 557-amino-acid chain; its full sequence is Urocanate hydratase (557 aa).

Residues 1-20 (MSNPRHNEREVRSPRGDELN) are disordered. NAD(+) contacts are provided by residues 52–53 (GG), Q130, 176–178 (GMG), E196, R201, 242–243 (NA), 263–267 (QTSAH), 273–274 (YL), and Y322. Residue C410 is part of the active site. An NAD(+)-binding site is contributed by G492.

It belongs to the urocanase family. It depends on NAD(+) as a cofactor.

It localises to the cytoplasm. It carries out the reaction 4-imidazolone-5-propanoate = trans-urocanate + H2O. The protein operates within amino-acid degradation; L-histidine degradation into L-glutamate; N-formimidoyl-L-glutamate from L-histidine: step 2/3. Functionally, catalyzes the conversion of urocanate to 4-imidazolone-5-propionate. This is Urocanate hydratase from Brucella anthropi (strain ATCC 49188 / DSM 6882 / CCUG 24695 / JCM 21032 / LMG 3331 / NBRC 15819 / NCTC 12168 / Alc 37) (Ochrobactrum anthropi).